We begin with the raw amino-acid sequence, 523 residues long: MTNIHNHKILILDFGSQYTQLIARRVREIGVYCELWAWDVTEEQIREFNPTGIILSGGPESTTEENSPRAPEYVFNAGVPVLGICYGMQTMAMQLGGLTETSDHREFGYASVDLQATDALFAKLNDNLTASEPKLDVWMSHGDKVTRLPQGFQVTGITPTCPIAAMSDESRRFYGVQFHPEVTHTKSGLELLTNFVVGICGCECKWTAENIIERRVARIKEQVGDDEVILGLSGGVDSSVTALLLHRAIGKNLHCVFVDNGLLRLNEGDQVMEMFGDKFGLNIIRVNAEDRFLDALKGIDEPEAKRKTIGKVFVDVFDDESKKLTSVKWLAQGTIYPDVIESAASKTGKAHVIKSHHNVGGLPDYMKLGLVEPLRELFKDEVRKIGLALGLPAEMLNRHPFPGPGLGVRVLGEIKKEYCDLLRKADAIFIEELYKADWYYKVSQAFTVFLPVKSVGVMGDGRKYDWVVSLRAVETIDFMTAHWAHLPYDLLGKISNRIINEVNGISRVVYDVSGKPPATIEWE.

The 198-residue stretch at 8–205 (KILILDFGSQ…VVGICGCECK (198 aa)) folds into the Glutamine amidotransferase type-1 domain. C85 acts as the Nucleophile in catalysis. Residues H179 and E181 contribute to the active site. Positions 206–398 (WTAENIIERR…LGLPAEMLNR (193 aa)) constitute a GMPS ATP-PPase domain. 233-239 (SGGVDSS) is a binding site for ATP.

In terms of assembly, homodimer.

The enzyme catalyses XMP + L-glutamine + ATP + H2O = GMP + L-glutamate + AMP + diphosphate + 2 H(+). The protein operates within purine metabolism; GMP biosynthesis; GMP from XMP (L-Gln route): step 1/1. Functionally, catalyzes the synthesis of GMP from XMP. This Actinobacillus pleuropneumoniae serotype 5b (strain L20) protein is GMP synthase [glutamine-hydrolyzing].